The primary structure comprises 154 residues: ATP synthase subunit b (154 aa).

Residues Ala-9 to Ala-29 traverse the membrane as a helical segment.

Belongs to the ATPase B chain family. In terms of assembly, F-type ATPases have 2 components, F(1) - the catalytic core - and F(0) - the membrane proton channel. F(1) has five subunits: alpha(3), beta(3), gamma(1), delta(1), epsilon(1). F(0) has three main subunits: a(1), b(2) and c(10-14). The alpha and beta chains form an alternating ring which encloses part of the gamma chain. F(1) is attached to F(0) by a central stalk formed by the gamma and epsilon chains, while a peripheral stalk is formed by the delta and b chains.

The protein resides in the cell inner membrane. In terms of biological role, f(1)F(0) ATP synthase produces ATP from ADP in the presence of a proton or sodium gradient. F-type ATPases consist of two structural domains, F(1) containing the extramembraneous catalytic core and F(0) containing the membrane proton channel, linked together by a central stalk and a peripheral stalk. During catalysis, ATP synthesis in the catalytic domain of F(1) is coupled via a rotary mechanism of the central stalk subunits to proton translocation. Its function is as follows. Component of the F(0) channel, it forms part of the peripheral stalk, linking F(1) to F(0). The polypeptide is ATP synthase subunit b (Klebsiella pneumoniae subsp. pneumoniae (strain ATCC 700721 / MGH 78578)).